The following is a 594-amino-acid chain: Parathyroid hormone/parathyroid hormone-related peptide receptor (594 aa).

Positions methionine 1–alanine 28 are cleaved as a signal peptide. Over aspartate 29–leucine 188 the chain is Extracellular. 3 disulfide bridges follow: cysteine 48/cysteine 117, cysteine 108/cysteine 149, and cysteine 132/cysteine 171. The tract at residues aspartate 66–arginine 102 is disordered. Residues asparagine 152, asparagine 162, asparagine 167, and asparagine 177 are each glycosylated (N-linked (GlcNAc...) asparagine). The helical transmembrane segment at glycine 189–isoleucine 209 threads the bilayer. Residues leucine 210–isoleucine 223 lie on the Cytoplasmic side of the membrane. A helical membrane pass occupies residues histidine 224–valine 244. The Extracellular segment spans residues leucine 245–threonine 295. Residues asparagine 296–phenylalanine 316 traverse the membrane as a helical segment. Topologically, residues serine 317 to lysine 319 are cytoplasmic. A helical membrane pass occupies residues lysine 320–tryptophan 340. At valine 341–lysine 361 the chain is on the extracellular side. Residues tryptophan 362 to isoleucine 382 form a helical membrane-spanning segment. The Cytoplasmic portion of the chain corresponds to valine 383–arginine 405. Residues lysine 406–methionine 426 form a helical membrane-spanning segment. The Extracellular segment spans residues alanine 427 to valine 440. A helical transmembrane segment spans residues glutamine 441–cysteine 461. At phenylalanine 462–methionine 594 the chain is on the cytoplasmic side. The Important for interaction with G proteins motif lies at tryptophan 475–tryptophan 478. Residues proline 525–methionine 594 form a disordered region. The span at threonine 543–alanine 558 shows a compositional bias: low complexity. Threonine 552 carries the phosphothreonine modification.

Belongs to the G-protein coupled receptor 2 family. In terms of assembly, homodimer in the absence of bound ligand. Peptide hormone binding leads to dissociation of the homodimer. Post-translationally, N-glycosylated.

It localises to the cell membrane. Its function is as follows. G-protein-coupled receptor for parathyroid hormone (PTH) and for parathyroid hormone-related peptide (PTHLH). Ligand binding causes a conformation change that triggers signaling via guanine nucleotide-binding proteins (G proteins) and modulates the activity of downstream effectors, such as adenylate cyclase (cAMP). PTH1R is coupled to G(s) G alpha proteins and mediates activation of adenylate cyclase activity. PTHLH dissociates from PTH1R more rapidly than PTH; as consequence, the cAMP response induced by PTHLH decays faster than the response induced by PTH. The protein is Parathyroid hormone/parathyroid hormone-related peptide receptor (PTH1R) of Pongo abelii (Sumatran orangutan).